A 443-amino-acid chain; its full sequence is Exodeoxyribonuclease 7 large subunit (443 aa).

This sequence belongs to the XseA family. In terms of assembly, heterooligomer composed of large and small subunits.

The protein resides in the cytoplasm. The catalysed reaction is Exonucleolytic cleavage in either 5'- to 3'- or 3'- to 5'-direction to yield nucleoside 5'-phosphates.. Bidirectionally degrades single-stranded DNA into large acid-insoluble oligonucleotides, which are then degraded further into small acid-soluble oligonucleotides. The chain is Exodeoxyribonuclease 7 large subunit from Vibrio vulnificus (strain YJ016).